The sequence spans 333 residues: MKKVGTAFLTTLFIFSSFTSAHAEEKKDSKAFIDVSAATLWTAPDSLRPIDVPSATNPVDLWKWTKSMTLDEKLWLTNANKLETQALLGQEVTVVDKKGDWVKVLVHGQPTPRNEEGYPGWMPEKQLTYNQEFADKTNEPFVLVTKPTAILYINPSEKHKSLEVSYNTRLPLLSEDTISYRVLLPNGQKAWLRKNDGTFYRSQNDIPTPAADDLINTGKMFLGLPYIWAGTSGFGFDCSGFTHTIYKSHGITIPRDSGPQSRNGVAVDKEHLQKGDLIFFAHDQGKGSVHHVAMYIGDGNMIHSPRAERSVEIIPLNTPGYIEEYAGARRYLP.

The N-terminal stretch at 1–23 is a signal peptide; that stretch reads MKKVGTAFLTTLFIFSSFTSAHA. Residues E83, Y118, 237 to 239, and 256 to 257 contribute to the substrate site; these read DCS and DS. In terms of domain architecture, NlpC/P60 spans 208–332; that stretch reads TPAADDLINT…EEYAGARRYL (125 aa). The active-site Nucleophile is C238. The Proton acceptor role is filled by H291. The active site involves H303.

This sequence belongs to the peptidase C40 family. As to quaternary structure, monomer in solution.

It catalyses the reaction The enzyme releases L-Ala-gamma-D-Glu dipeptides from cell wall peptides via cleavage of an L-Ala-gamma-D-Glu-|-L-Lys bond.. The protein operates within cell wall degradation; peptidoglycan degradation. Functionally, specifically hydrolyzes gamma-D-glutamyl-L-lysine bonds in murein peptides, releasing L-Ala-D-Glu. The polypeptide is Gamma-D-glutamyl-L-lysine dipeptidyl-peptidase (Bacillus cereus (strain ATCC 10987 / NRS 248)).